Reading from the N-terminus, the 302-residue chain is MDKAKLKEELTKRISSPVLENEPLAQHTTWKIGGPADFLIEPQSIEELSLVIRFLTENAVNFRVIGNGSNILVLDRGFRGVIIKTKKINKVEITAGGQVFAEAGVLLPALAARALKVGLSGLEELCAIPGSVGGAIRQNAGAHGKEIKDVLKRVWTINERGELKEFFANECGFKYRSSRFKEEKQWIVKAEFSLNPGDKKEILKKIREFREKRLASQPLEFPNAGSVFKNPEGIPAWKLIKEAGAQGLKKGGAMVSEKHANFIINTGGASAADVIYLINKIQELVWKKFSVKLLLEVEVLGE.

The region spanning 31 to 213 (KIGGPADFLI…KKIREFREKR (183 aa)) is the FAD-binding PCMH-type domain. R176 is a catalytic residue. Catalysis depends on S226, which acts as the Proton donor. The active site involves E296.

Belongs to the MurB family. The cofactor is FAD.

Its subcellular location is the cytoplasm. The enzyme catalyses UDP-N-acetyl-alpha-D-muramate + NADP(+) = UDP-N-acetyl-3-O-(1-carboxyvinyl)-alpha-D-glucosamine + NADPH + H(+). It participates in cell wall biogenesis; peptidoglycan biosynthesis. Cell wall formation. This is UDP-N-acetylenolpyruvoylglucosamine reductase from Carboxydothermus hydrogenoformans (strain ATCC BAA-161 / DSM 6008 / Z-2901).